The primary structure comprises 406 residues: MAIEQTAITRATFDEVILPIYAPAEFIPVKGQGSRIWDQQGKEYVDFAGGIAVTALGHCHPALVNALKTQGETLWHISNVFTNEPALRLGRKLIEATFAERVVFMNSGTEANETAFKLARHYACVRHSPFKTKIIAFHNAFHGRSLFTVSVGGQPKYSDGFGPKPADIIHVPFNDLHAVKAVMDDHTCAVVVEPIQGEGGVTAATPEFLQGLRELCDQHQALLVFDEVQCGMGRTGDLFAYMHYGVTPDILTSAKALGGGFPVSAMLTTAEIASAFHPGSHGSTYGGNPLACAVAGAAFDIINTPEVLEGIQAKRQHFVDHLQKIDQQYDVFSDIRGMGLLIGAELKPQYKGRARDFLYAGAEEGVMVLNAGPDVMRFAPSLVVEDADIDEGMHRFAHAVAKVVGA.

Pyridoxal 5'-phosphate-binding positions include 108-109 (GT) and F141. R144 is a N(2)-acetyl-L-ornithine binding site. 226-229 (DEVQ) serves as a coordination point for pyridoxal 5'-phosphate. An N6-(pyridoxal phosphate)lysine modification is found at K255. S283 lines the N(2)-acetyl-L-ornithine pocket. T284 provides a ligand contact to pyridoxal 5'-phosphate.

This sequence belongs to the class-III pyridoxal-phosphate-dependent aminotransferase family. ArgD subfamily. Homodimer. Pyridoxal 5'-phosphate serves as cofactor.

The protein resides in the cytoplasm. It catalyses the reaction N(2)-acetyl-L-ornithine + 2-oxoglutarate = N-acetyl-L-glutamate 5-semialdehyde + L-glutamate. The catalysed reaction is N-succinyl-(2S,6S)-2,6-diaminopimelate + 2-oxoglutarate = (S)-2-succinylamino-6-oxoheptanedioate + L-glutamate. It functions in the pathway amino-acid biosynthesis; L-arginine biosynthesis; N(2)-acetyl-L-ornithine from L-glutamate: step 4/4. It participates in amino-acid biosynthesis; L-lysine biosynthesis via DAP pathway; LL-2,6-diaminopimelate from (S)-tetrahydrodipicolinate (succinylase route): step 2/3. Its function is as follows. Involved in both the arginine and lysine biosynthetic pathways. The polypeptide is Acetylornithine/succinyldiaminopimelate aminotransferase (Escherichia coli O6:H1 (strain CFT073 / ATCC 700928 / UPEC)).